A 295-amino-acid chain; its full sequence is Pyridoxal 5'-phosphate synthase subunit PdxS (295 aa).

D-ribose 5-phosphate is bound at residue aspartate 25. The active-site Schiff-base intermediate with D-ribose 5-phosphate is the lysine 82. Glycine 154 contributes to the D-ribose 5-phosphate binding site. Residue arginine 166 participates in D-glyceraldehyde 3-phosphate binding. D-ribose 5-phosphate is bound by residues glycine 215 and 236 to 237 (GS).

It belongs to the PdxS/SNZ family. In terms of assembly, in the presence of PdxT, forms a dodecamer of heterodimers.

The enzyme catalyses aldehydo-D-ribose 5-phosphate + D-glyceraldehyde 3-phosphate + L-glutamine = pyridoxal 5'-phosphate + L-glutamate + phosphate + 3 H2O + H(+). It functions in the pathway cofactor biosynthesis; pyridoxal 5'-phosphate biosynthesis. Catalyzes the formation of pyridoxal 5'-phosphate from ribose 5-phosphate (RBP), glyceraldehyde 3-phosphate (G3P) and ammonia. The ammonia is provided by the PdxT subunit. Can also use ribulose 5-phosphate and dihydroxyacetone phosphate as substrates, resulting from enzyme-catalyzed isomerization of RBP and G3P, respectively. The polypeptide is Pyridoxal 5'-phosphate synthase subunit PdxS (Listeria monocytogenes serotype 4b (strain CLIP80459)).